We begin with the raw amino-acid sequence, 454 residues long: N-acetyl-S-(2-succino)cysteine lyase (454 aa).

106–107 (TT) contacts fumarate. Residue H154 is the Proton donor/acceptor of the active site. R233 serves as a coordination point for fumarate. S277 (proton donor/acceptor) is an active-site residue. Fumarate contacts are provided by residues T278 and 283–285 (KRN).

This sequence belongs to the lyase 1 family.

It catalyses the reaction N-acetyl-S-(2-succino)-L-cysteine = N-acetyl-L-cysteine + fumarate. It participates in amino-acid biosynthesis; L-cysteine biosynthesis. Functionally, catalyzes the cleavage of N-acetyl-S-(2-succino)cysteine into fumarate and N-acetylcysteine. Is involved in a S-(2-succino)cysteine (2SC) degradation pathway that allows the bacterium to recover cysteine from 2SC and to detoxify 2SC that may be a toxic metabolite. Can also perform the reverse reaction in vitro, and has minor activity against 2SC and other small molecule thiols. This chain is N-acetyl-S-(2-succino)cysteine lyase, found in Dickeya dadantii (strain 3937) (Erwinia chrysanthemi (strain 3937)).